We begin with the raw amino-acid sequence, 553 residues long: Threonylcarbamoyladenosine tRNA methylthiotransferase (553 aa).

Positions 21-61 are disordered; the sequence is SAEDVKPQERYQNKKSVTVRAKKRVQIKPETDAEEKPTPRP. Composition is skewed to basic and acidic residues over residues 23-32 and 47-58; these read EDVKPQERYQ and IKPETDAEEKPT. The MTTase N-terminal domain occupies 72–179; the sequence is QKVFVKTWGC…VVEVVEETLK (108 aa). [4Fe-4S] cluster contacts are provided by C81, C116, C145, C221, C225, and C228. The 232-residue stretch at 207-438 folds into the Radical SAM core domain; the sequence is RKNPLIEIIS…DLFYSYEPYA (232 aa). The TRAM domain maps to 438-500; it reads AQRVGEMYTV…KFSMVGEILD (63 aa). The chain crosses the membrane as a helical span at residues 533 to 553; it reads VGIALVVGSLAFLLQLLIRFL.

This sequence belongs to the methylthiotransferase family. CDKAL1 subfamily. It depends on [4Fe-4S] cluster as a cofactor.

The protein resides in the membrane. The catalysed reaction is N(6)-L-threonylcarbamoyladenosine(37) in tRNA + (sulfur carrier)-SH + AH2 + 2 S-adenosyl-L-methionine = 2-methylsulfanyl-N(6)-L-threonylcarbamoyladenosine(37) in tRNA + (sulfur carrier)-H + 5'-deoxyadenosine + L-methionine + A + S-adenosyl-L-homocysteine + 2 H(+). Catalyzes the methylthiolation of N6-threonylcarbamoyladenosine (t(6)A), leading to the formation of 2-methylthio-N6-threonylcarbamoyladenosine (ms(2)t(6)A) at position 37 in tRNAs that read codons beginning with adenine. The sequence is that of Threonylcarbamoyladenosine tRNA methylthiotransferase from Drosophila pseudoobscura pseudoobscura (Fruit fly).